The primary structure comprises 753 residues: Polyadenylate-binding protein, cytoplasmic and nuclear (753 aa).

The span at Met1–Ala26 shows a compositional bias: polar residues. Residues Met1–Ala52 are disordered. Residues Ser37–Ala52 show a composition bias toward low complexity. 4 consecutive RRM domains span residues Ala52–Arg130, Gly140–Ser217, Thr233–Lys310, and Val336–Arg460. Disordered stretches follow at residues Val367 to Lys417 and Met602 to Val645. Residues Glu379–Lys417 show a composition bias toward basic and acidic residues. Over residues Gly605–Gly631 the composition is skewed to gly residues. The PABC domain maps to Thr648–Lys725. Residues Gly728–Ser753 form a disordered region. Residues Ala737–Ser753 are compositionally biased toward basic and acidic residues.

It belongs to the polyadenylate-binding protein type-1 family.

It localises to the cytoplasm. The protein resides in the nucleus. Its function is as follows. Binds the poly(A) tail of mRNA. Appears to be an important mediator of the multiple roles of the poly(A) tail in mRNA biogenesis, stability and translation. In the nucleus, involved in both mRNA cleavage and polyadenylation. Is also required for efficient mRNA export to the cytoplasm. Acts in concert with a poly(A)-specific nuclease (PAN) to affect poly(A) tail shortening, which may occur concomitantly with either nucleocytoplasmic mRNA transport or translational initiation. In the cytoplasm, stimulates translation initiation and regulates mRNA decay through translation termination-coupled poly(A) shortening, probably mediated by PAN. The polypeptide is Polyadenylate-binding protein, cytoplasmic and nuclear (pab1) (Aspergillus fumigatus (strain ATCC MYA-4609 / CBS 101355 / FGSC A1100 / Af293) (Neosartorya fumigata)).